The chain runs to 311 residues: Transcription factor MafB (311 aa).

Disordered stretches follow at residues 35–78 (PLGR…PTEQ) and 150–199 (EDLA…EDRF). Low complexity predominate over residues 54 to 76 (SVSSTPISTPCSSVPSSPSFSPT). Residues 157–167 (HPHHHHHHHHQ) show a composition bias toward basic residues. Residues 168–194 (ASPTPSTSSSSSQQLQTSHQQHPPSSS) are compositionally biased toward low complexity. A basic motif region spans residues 226-251 (RLKQKRRTLKNRGYAQSCRYKRVQQK). Residues 226-289 (RLKQKRRTLK…DAYKLKCEKL (64 aa)) enclose the bZIP domain. The interval 254–275 (LENEKTQLIQQVEQLKQEVTRL) is leucine-zipper.

It belongs to the bZIP family. Maf subfamily. In terms of assembly, homodimer or heterodimer with other bHLH-Zip transcription factors. Binds DNA as a homodimer or heterodimer. Self-associates; the interaction requires the intact MAFB leucine-zipper domain. Interacts with FOS, HOXD12 and PRRX1. Expressed in brain, thymus, gut, lung, mesenterium, spleen, kidney, ovary and bursa.

Its subcellular location is the nucleus. Functionally, acts as a transcriptional activator or repressor. Positively regulates the expression of alpha-A crystallin genes during lens fiber cell differentiation. Binds to Maf recognition elements (MARE). The polypeptide is Transcription factor MafB (MAFB) (Gallus gallus (Chicken)).